Consider the following 311-residue polypeptide: Elongation factor Ts (311 aa).

The involved in Mg(2+) ion dislocation from EF-Tu stretch occupies residues 81 to 84; sequence TDFV.

The protein belongs to the EF-Ts family.

It localises to the cytoplasm. Functionally, associates with the EF-Tu.GDP complex and induces the exchange of GDP to GTP. It remains bound to the aminoacyl-tRNA.EF-Tu.GTP complex up to the GTP hydrolysis stage on the ribosome. In Trichlorobacter lovleyi (strain ATCC BAA-1151 / DSM 17278 / SZ) (Geobacter lovleyi), this protein is Elongation factor Ts.